Consider the following 927-residue polypeptide: Protein unc-45 homolog B (927 aa).

TPR repeat units lie at residues 4–37 (PVQLKEEGNKYFQSNEYGQAIQCYSKALKLITDK), 41–74 (AVLYRNRSACYLKQDNYVQAAADASKAIDVDASD), and 76–108 (KALFRRCQALEKLGKLDQAYKDVQRCATLEPKN). ARM repeat units lie at residues 167–206 (DAGAEQIFQNNGVNLLMQLIESKDPEMILSAIRTLSGMCT), 209–248 (RARATAIVHLVGINKICSIMAVDNEEIALAACNLLQNIVD), and 746–785 (DKLRQKIIKEKALPEIENYMFENHEQIRQAATECMCNLAL).

Detected initially throughout the somites and the heart and gradually also expressed in the jaw, branchial arches and body wall muscles at later embryonic stages.

It localises to the cytoplasm. The protein localises to the myofibril. It is found in the sarcomere. Its subcellular location is the z line. The protein resides in the a band. It localises to the perinuclear region. The protein localises to the cytosol. In terms of biological role, acts as a co-chaperone for HSP90 and is required for proper folding of the myosin motor domain. Plays a role in sarcomere formation during muscle cell development. Is necessary for normal early lens development. This chain is Protein unc-45 homolog B, found in Xenopus tropicalis (Western clawed frog).